The primary structure comprises 77 residues: Translational regulator CsrA (77 aa).

The protein belongs to the CsrA/RsmA family. In terms of assembly, homodimer; the beta-strands of each monomer intercalate to form a hydrophobic core, while the alpha-helices form wings that extend away from the core.

The protein localises to the cytoplasm. In terms of biological role, a translational regulator that binds mRNA to regulate translation initiation and/or mRNA stability. Usually binds in the 5'-UTR at or near the Shine-Dalgarno sequence preventing ribosome-binding, thus repressing translation. Its main target seems to be the major flagellin gene, while its function is anatagonized by FliW. The chain is Translational regulator CsrA from Desulfitobacterium hafniense (strain DSM 10664 / DCB-2).